Consider the following 399-residue polypeptide: Rhodopsin, G0-coupled (399 aa).

Residues 1–17 (MPFPLNRTDTALVISPS) lie on the Extracellular side of the membrane. N-linked (GlcNAc...) asparagine glycosylation is present at Asn-6. Residues 18–43 (EFRIIGIFISICCIIGVLGNLLIIIV) traverse the membrane as a helical segment. Topologically, residues 44–55 (FAKRRSVRRPIN) are cytoplasmic. The chain crosses the membrane as a helical span at residues 56–81 (FFVLNLAVSDLIVALLGYPMTAASAF). Topologically, residues 82-95 (SNRWIFDNIGCKIY) are extracellular. The cysteines at positions 92 and 169 are disulfide-linked. The helical transmembrane segment at 96–115 (AFLCFNSGVISIMTHAALSF) threads the bilayer. At 116 to 134 (CRYIIICQYGYRKKITQTT) the chain is on the cytoplasmic side. The helical transmembrane segment at 135 to 158 (VLRTLFSIWSFAMFWTLSPLFGWS) threads the bilayer. Residues 159–182 (SYVIEVVPVSCSVNWYGHGLGDVS) are Extracellular-facing. Residues 183–210 (YTISVIVAVYVFPLSIIVFSYGMILQEK) traverse the membrane as a helical segment. At 211-240 (VCKDSRKNGIRAQQRYTPRFIQDIEQRVTF) the chain is on the cytoplasmic side. Residues 241–263 (ISFLMMAAFMVAWTPYAIMSALA) form a helical membrane-spanning segment. The Extracellular portion of the chain corresponds to 264-271 (IGSFNVEN). Residues 272–295 (SFAALPTLFAKASCAYNPFIYAFT) form a helical membrane-spanning segment. Lys-282 is subject to N6-(retinylidene)lysine. Topologically, residues 296–399 (NANFRDTVVE…NTFTADFSVI (104 aa)) are cytoplasmic.

This sequence belongs to the G-protein coupled receptor 1 family. Opsin subfamily. Phosphorylated on some or all of the serine and threonine residues present in the C-terminal region. In terms of tissue distribution, retina. Expressed in the hyperpolarizing cell layer of the photoreceptor cells with its photoreceptive region adjacent to the lens.

The protein localises to the membrane. Visual pigments are the light-absorbing molecules that mediate vision. They consist of an apoprotein, opsin, covalently linked to cis-retinal. The sequence is that of Rhodopsin, G0-coupled (SCOP2) from Mizuhopecten yessoensis (Japanese scallop).